The primary structure comprises 435 residues: Polyadenylate-binding protein RBP47B (435 aa).

Over residues Met-1–Gly-15 the composition is skewed to polar residues. Disordered stretches follow at residues Met-1–Met-41 and Tyr-85–Gly-104. The segment covering Gln-29–Met-41 has biased composition (low complexity). RRM domains are found at residues Lys-108 to Phe-188, Leu-202 to Pro-281, and Ala-321 to Ser-393. The interval Arg-392–Arg-412 is disordered.

It belongs to the polyadenylate-binding RBP47 family. As to quaternary structure, interacts with the poly(A) tail of mRNA in nucleus. Expressed at low levels in leaves, stems, flowers, and seedlings.

The protein resides in the nucleus. Its subcellular location is the cytoplasmic granule. Its function is as follows. Heterogeneous nuclear ribonucleoprotein (hnRNP)-protein binding the poly(A) tail of mRNA and probably involved in some steps of pre-mRNA maturation. The protein is Polyadenylate-binding protein RBP47B (RBP47B) of Arabidopsis thaliana (Mouse-ear cress).